The chain runs to 215 residues: Cytochrome b6 (215 aa).

The chain crosses the membrane as a helical span at residues 32 to 52; it reads IFYCFGGIVFTCFLVQVATGF. C35 provides a ligand contact to heme c. Heme b-binding residues include H86 and H100. The next 3 helical transmembrane spans lie at 90–110, 116–136, and 186–206; these read ASMMVMMLVLHVFRVYLTGGF, LTWVTGVILAVVTVSFGVTGY, and AHTFVLPLAAAVLMLTHFLMI. Residues H187 and H202 each coordinate heme b.

The protein belongs to the cytochrome b family. PetB subfamily. The 4 large subunits of the cytochrome b6-f complex are cytochrome b6, subunit IV (17 kDa polypeptide, PetD), cytochrome f and the Rieske protein, while the 4 small subunits are PetG, PetL, PetM and PetN. The complex functions as a dimer. Requires heme b as cofactor. It depends on heme c as a cofactor.

The protein localises to the plastid. Its subcellular location is the chloroplast thylakoid membrane. Its function is as follows. Component of the cytochrome b6-f complex, which mediates electron transfer between photosystem II (PSII) and photosystem I (PSI), cyclic electron flow around PSI, and state transitions. The sequence is that of Cytochrome b6 from Skeletonema costatum (Marine centric diatom).